Reading from the N-terminus, the 177-residue chain is Acetyltransferase (177 aa).

Residues 4–174 form the N-acetyltransferase domain; it reads AQLRRVTAES…PTAIYFKTLG (171 aa). Acetyl-CoA is bound by residues glutamate 27, 96–98, 104–109, 130–131, and tyrosine 141; these read LMV, GRGLGR, and DT.

In terms of biological role, renders tabtoxin-producing pathogens tolerant to their own phytotoxins. The protein is Acetyltransferase (ttr) of Pseudomonas amygdali pv. tabaci (Pseudomonas syringae pv. tabaci).